Consider the following 482-residue polypeptide: CBL-interacting serine/threonine-protein kinase 23 (482 aa).

Positions 1–25 (MASRTTPSRSTPSRSTPSGSSSGGR) are enriched in low complexity. The disordered stretch occupies residues 1-29 (MASRTTPSRSTPSRSTPSGSSSGGRTRVG). A Protein kinase domain is found at 31–286 (YELGRTLGEG…FAEVIENEWF (256 aa)). Residues 37–45 (LGEGTFAKV) and K60 contribute to the ATP site. Catalysis depends on D154, which acts as the Proton acceptor. Positions 172-201 (DFGLSALPQQVREDGLLHTTCGTPNYVAPE) are activation loop. Residue S176 is modified to Phosphoserine. Position 190 is a phosphothreonine (T190). The 25-residue stretch at 328–352 (KTPVTMNAFELISTSQGLNLGSLFE) folds into the NAF domain. The segment at 359–388 (KRKTRFTSKSSANEIVTKIEAAAAPMGFDV) is PPI. Residues 459-482 (KEEGTDGGGTNGAMANRTIAKQST) are disordered.

It belongs to the protein kinase superfamily. CAMK Ser/Thr protein kinase family. SNF1 subfamily. Part of a K(+)-channel calcium-sensing kinase/phosphatase complex composed by a calcium sensor CBL (CBL1, CBL2, CBL3 or CBL9), a kinase CIPK (CIPK6, CIPK16 or CIPK23), a phosphatase PP2C (AIP1) and a K(+)-channel (AKT1). Interacts with AKT1, CBL1, CBL2, CBL3, CBL5, CBL8, CBL9 and NRT1.1. Requires Mn(2+) as cofactor. Autophosphorylated. As to expression, in seedlings, mostly in vascular bundles, and in roots, especially in cortex and endodermis cells. In adult plants, mostly expressed in flowers, and, to a lower extent, in roots, leaves, stems and siliques, particularly in vascular tissues. Also detected in guard cells and root hairs.

The protein resides in the cell membrane. It catalyses the reaction L-seryl-[protein] + ATP = O-phospho-L-seryl-[protein] + ADP + H(+). The enzyme catalyses L-threonyl-[protein] + ATP = O-phospho-L-threonyl-[protein] + ADP + H(+). In terms of biological role, CIPK serine-threonine protein kinases interact with CBL proteins. Binding of a CBL protein to the regulatory NAF domain of CIPK protein leads to activation of the kinase in a calcium-dependent manner. Downstream of CBL1, CBL2, CBL3 and CBL9, regulates by phosphorylation the K(+) conductance and uptake of AKT1 in low K(+) condition, in response to calcium signaling and during the stomatal opening regulation by monitoring the turgor pressure in guard cells. In response to low nitrate concentration, phosphorylates NRT1.1, switching it from a low-affinity nitrate transporter to a high-affinity transporter. Confers tolerance to low potassium conditions. Involved in drought sensitivity and leaf transpiration. In Arabidopsis thaliana (Mouse-ear cress), this protein is CBL-interacting serine/threonine-protein kinase 23 (CIPK23).